Here is a 354-residue protein sequence, read N- to C-terminus: MKNKNKRLLVMAGGTGGHVFPGLAVAKQLQSEGWEIRWLGTEDRMEADLVPKHGIEIDFIKVKGLRGQGLKKLLIAPFQIIGAILQAKKHIQAWQPDVVLGMGGYVSGPGGIAAWLSGIPVVLHEQNAVAGLTNQWLSKIAKRVFQAFPGAFPNADVVGNPVREDVCQLPHPSERFAERNGPIRVLIMGGSQGARILNATLPEVLPKLNHSVEIWHQAGKGNQETVNNAYKDNGITDAKVTEFIDDVAAAYAWADVLVCRSGALTVSEVSAAGVGSVFIPFMHKDRQQALNADHLVQCGAAKMIEQQDLTVQSLVDTLNGLERPKLLEMACNARNAAIIDADVRVATAIKSLAK.

UDP-N-acetyl-alpha-D-glucosamine-binding positions include 15 to 17, Asn-127, Arg-163, Ser-191, Ile-244, 263 to 268, and Gln-288; these read TGG and ALTVSE.

It belongs to the glycosyltransferase 28 family. MurG subfamily.

It is found in the cell inner membrane. It carries out the reaction di-trans,octa-cis-undecaprenyl diphospho-N-acetyl-alpha-D-muramoyl-L-alanyl-D-glutamyl-meso-2,6-diaminopimeloyl-D-alanyl-D-alanine + UDP-N-acetyl-alpha-D-glucosamine = di-trans,octa-cis-undecaprenyl diphospho-[N-acetyl-alpha-D-glucosaminyl-(1-&gt;4)]-N-acetyl-alpha-D-muramoyl-L-alanyl-D-glutamyl-meso-2,6-diaminopimeloyl-D-alanyl-D-alanine + UDP + H(+). Its pathway is cell wall biogenesis; peptidoglycan biosynthesis. Cell wall formation. Catalyzes the transfer of a GlcNAc subunit on undecaprenyl-pyrophosphoryl-MurNAc-pentapeptide (lipid intermediate I) to form undecaprenyl-pyrophosphoryl-MurNAc-(pentapeptide)GlcNAc (lipid intermediate II). This Aliivibrio salmonicida (strain LFI1238) (Vibrio salmonicida (strain LFI1238)) protein is UDP-N-acetylglucosamine--N-acetylmuramyl-(pentapeptide) pyrophosphoryl-undecaprenol N-acetylglucosamine transferase.